Reading from the N-terminus, the 336-residue chain is Putative cysteine synthase (336 aa).

Residue K41 is modified to N6-(pyridoxal phosphate)lysine. Pyridoxal 5'-phosphate-binding positions include N71, 179 to 183 (GTGGS), and S269.

It belongs to the cysteine synthase/cystathionine beta-synthase family. Requires pyridoxal 5'-phosphate as cofactor.

The catalysed reaction is O-acetyl-L-serine + hydrogen sulfide = L-cysteine + acetate. In terms of biological role, as it is highly similar to bacterial and plant cysteine synthases, it is possible that it catalyzes a related reaction. This chain is Putative cysteine synthase, found in Sinorhizobium fredii (strain NBRC 101917 / NGR234).